Reading from the N-terminus, the 71-residue chain is Protein MMP24OS (71 aa).

The segment covering 1 to 10 has biased composition (gly residues); sequence MGAQLSGGRG. The disordered stretch occupies residues 1-61; it reads MGAQLSGGRG…PSPWGPLDDV (61 aa). Residues 36–55 show a composition bias toward pro residues; sequence HPPQPQPQPQPQPQPEPSPW.

This chain is Protein MMP24OS, found in Homo sapiens (Human).